Reading from the N-terminus, the 439-residue chain is MKTLVWQSLSDSQQDTVLQRPAITEGANITAAVTSVINTVKQEGDAGVFALTEKFDGVKPDSIRVSNAEIEAASDRLSEEMKTALKQAYSNISKFHQAQKPQPVKVETQPGVICEQITMPINKVGLYIPGGSAPLPSTVLMLGIPAQIAGCHKVVLCSPPPIADEILYVAKLCKIDEVYNIGGAQAVAAMAYGTESVSKVDKIFGPGNAYVTEAKRQVSNDFRGAAIDMPAGPSEVLVIADESADPDFIAADLLSQAEHGPDSQVVLVTPSPIIADQVADAVERQLKELSREDIARQALGSSLLIVADSLTQCVSISNFYGPEHLIVQTKNPRELLPLLDNAGSIFLGDYSPESAGDYASGTNHVLPTYGYTRTYSSLGLADFSKRMTVQELTADGLKGLAPTVVTMAEAEGLDAHKRAVTIRIEKLAQLDVNKQEVNQ.

Positions 127, 185, and 208 each coordinate NAD(+). Positions 234, 256, and 259 each coordinate substrate. Residues Gln-256 and His-259 each contribute to the Zn(2+) site. Residues Glu-323 and His-324 each act as proton acceptor in the active site. His-324, Asp-357, Glu-411, and His-416 together coordinate substrate. Asp-357 provides a ligand contact to Zn(2+). His-416 lines the Zn(2+) pocket.

Belongs to the histidinol dehydrogenase family. Requires Zn(2+) as cofactor.

The enzyme catalyses L-histidinol + 2 NAD(+) + H2O = L-histidine + 2 NADH + 3 H(+). The protein operates within amino-acid biosynthesis; L-histidine biosynthesis; L-histidine from 5-phospho-alpha-D-ribose 1-diphosphate: step 9/9. Catalyzes the sequential NAD-dependent oxidations of L-histidinol to L-histidinaldehyde and then to L-histidine. This Aliivibrio fischeri (strain ATCC 700601 / ES114) (Vibrio fischeri) protein is Histidinol dehydrogenase.